Reading from the N-terminus, the 519-residue chain is Histidine ammonia-lyase (519 aa).

The segment at residues 146 to 148 (ASG) is a cross-link (5-imidazolinone (Ala-Gly)). Serine 147 bears the 2,3-didehydroalanine (Ser) mark.

Belongs to the PAL/histidase family. Contains an active site 4-methylidene-imidazol-5-one (MIO), which is formed autocatalytically by cyclization and dehydration of residues Ala-Ser-Gly.

The protein localises to the cytoplasm. The enzyme catalyses L-histidine = trans-urocanate + NH4(+). The protein operates within amino-acid degradation; L-histidine degradation into L-glutamate; N-formimidoyl-L-glutamate from L-histidine: step 1/3. The sequence is that of Histidine ammonia-lyase from Psychrobacter sp. (strain PRwf-1).